The following is a 256-amino-acid chain: Major prion protein (256 aa).

An N-terminal signal peptide occupies residues 1-24; it reads MVKSHIGSWILVLFVAMWSDVGLC. The interval 25-233 is interaction with GRB2, ERI3 and SYN1; it reads KKRPKPGGGW…ESQAYYQRGA (209 aa). Residues 28–110 form a disordered region; it reads PKPGGGWNTG…QWNKPSKPKT (83 aa). 5 repeat units span residues 54–62, 63–70, 71–78, 79–86, and 87–95. The 5 X 8 AA tandem repeats of P-H-G-G-G-W-G-Q stretch occupies residues 54–95; sequence PQGGGGWGQPHGGGWGQPHGGGWGQPHGGGWGQPHGGGGWGQ. The segment covering 55-97 has biased composition (gly residues); that stretch reads QGGGGWGQPHGGGWGQPHGGGWGQPHGGGWGQPHGGGGWGQGG. Residues His64, Gly65, Gly66, His72, Gly73, Gly74, His80, Gly81, Gly82, His88, Gly90, and Gly91 each contribute to the Cu(2+) site. Cys182 and Cys217 form a disulfide bridge. 2 N-linked (GlcNAc...) asparagine glycosylation sites follow: Asn184 and Asn200. Ala233 carries GPI-anchor amidated alanine lipidation. Positions 234–256 are cleaved as a propeptide — removed in mature form; sequence SVILFSSPPVILLISFLIFLIVG.

This sequence belongs to the prion family. In terms of assembly, monomer and homodimer. Has a tendency to aggregate into amyloid fibrils containing a cross-beta spine, formed by a steric zipper of superposed beta-strands. Soluble oligomers may represent an intermediate stage on the path to fibril formation. Copper binding may promote oligomerization. Interacts with GRB2, APP, ERI3/PRNPIP and SYN1. Mislocalized cytosolically exposed PrP interacts with MGRN1; this interaction alters MGRN1 subcellular location and causes lysosomal enlargement. Interacts with KIAA1191.

The protein resides in the cell membrane. It localises to the golgi apparatus. Its function is as follows. Its primary physiological function is unclear. Has cytoprotective activity against internal or environmental stresses. May play a role in neuronal development and synaptic plasticity. May be required for neuronal myelin sheath maintenance. May play a role in iron uptake and iron homeostasis. Soluble oligomers are toxic to cultured neuroblastoma cells and induce apoptosis (in vitro). Association with GPC1 (via its heparan sulfate chains) targets PRNP to lipid rafts. Also provides Cu(2+) or Zn(2+) for the ascorbate-mediated GPC1 deaminase degradation of its heparan sulfate side chains. This Odocoileus hemionus (Mule deer) protein is Major prion protein (PRNP).